Here is a 230-residue protein sequence, read N- to C-terminus: Octanoyltransferase (230 aa).

The BPL/LPL catalytic domain maps to 31 to 230 (PETPDELWIC…GDKLTRYLAP (200 aa)). Substrate-binding positions include 70 to 77 (RGGQVTYH), 163 to 165 (ALG), and 176 to 178 (GVA). Catalysis depends on cysteine 194, which acts as the Acyl-thioester intermediate.

It belongs to the LipB family.

The protein resides in the cytoplasm. The catalysed reaction is octanoyl-[ACP] + L-lysyl-[protein] = N(6)-octanoyl-L-lysyl-[protein] + holo-[ACP] + H(+). It functions in the pathway protein modification; protein lipoylation via endogenous pathway; protein N(6)-(lipoyl)lysine from octanoyl-[acyl-carrier-protein]: step 1/2. Functionally, catalyzes the transfer of endogenously produced octanoic acid from octanoyl-acyl-carrier-protein onto the lipoyl domains of lipoate-dependent enzymes. Lipoyl-ACP can also act as a substrate although octanoyl-ACP is likely to be the physiological substrate. This Albidiferax ferrireducens (strain ATCC BAA-621 / DSM 15236 / T118) (Rhodoferax ferrireducens) protein is Octanoyltransferase.